The following is a 138-amino-acid chain: ATP synthase epsilon chain (138 aa).

The protein belongs to the ATPase epsilon chain family. As to quaternary structure, F-type ATPases have 2 components, CF(1) - the catalytic core - and CF(0) - the membrane proton channel. CF(1) has five subunits: alpha(3), beta(3), gamma(1), delta(1), epsilon(1). CF(0) has three main subunits: a, b and c.

The protein resides in the cell inner membrane. Its function is as follows. Produces ATP from ADP in the presence of a proton gradient across the membrane. The protein is ATP synthase epsilon chain of Acidovorax ebreus (strain TPSY) (Diaphorobacter sp. (strain TPSY)).